The sequence spans 127 residues: Riboflavin kinase (127 aa).

10–15 (GLGEGR) is a CDP binding site. T39 and N41 together coordinate Mg(2+). FMN is bound by residues T96 and E104. CDP is bound at residue 109–112 (IQLR).

Belongs to the archaeal riboflavin kinase family. The cofactor is Mg(2+).

The enzyme catalyses riboflavin + CTP = CDP + FMN + H(+). Its pathway is cofactor biosynthesis; FMN biosynthesis; FMN from riboflavin (CTP route): step 1/1. Functionally, catalyzes the CTP-dependent phosphorylation of riboflavin (vitamin B2) to form flavin mononucleotide (FMN). The sequence is that of Riboflavin kinase from Methanococcus maripaludis (strain C5 / ATCC BAA-1333).